Consider the following 962-residue polypeptide: Leucine--tRNA ligase (962 aa).

A 'HIGH' region motif is present at residues 68 to 79; the sequence is PYPSGAGLHVGH. The interval 559 to 582 is disordered; the sequence is DYSPRTFDPDDANTSPETPLSRNE. The segment covering 570–579 has biased composition (polar residues); that stretch reads ANTSPETPLS. Positions 733-737 match the 'KMSKS' region motif; the sequence is KMGKS. Residue lysine 736 coordinates ATP.

It belongs to the class-I aminoacyl-tRNA synthetase family.

The protein localises to the cytoplasm. It carries out the reaction tRNA(Leu) + L-leucine + ATP = L-leucyl-tRNA(Leu) + AMP + diphosphate. In Streptomyces avermitilis (strain ATCC 31267 / DSM 46492 / JCM 5070 / NBRC 14893 / NCIMB 12804 / NRRL 8165 / MA-4680), this protein is Leucine--tRNA ligase.